A 212-amino-acid polypeptide reads, in one-letter code: MSKGFLVSLEGPEGAGKTSVLEALLPILEEKGVKVLTTREPGGVLIGEKIREVILDPSHTQMDAKTELLLYIASRRQHLVEKVLPALEAGKLVIMDRFIDSSVAYQGFGRGLDIEAIDWLNQFATDGLKPDLTLYFDIEVEEGLARIAANSDREVNRLDLEGLDLHKKVRQGYLSLLDKEGNRIVKIDASLPLEQVVETTKAVLFDGMGLAK.

Residue 11–18 coordinates ATP; it reads GPEGAGKT.

Belongs to the thymidylate kinase family.

The catalysed reaction is dTMP + ATP = dTDP + ADP. Its function is as follows. Phosphorylation of dTMP to form dTDP in both de novo and salvage pathways of dTTP synthesis. The protein is Thymidylate kinase of Streptococcus pneumoniae (strain P1031).